The chain runs to 297 residues: Ribosomal protein L11 methyltransferase (297 aa).

Positions 139, 164, 186, and 233 each coordinate S-adenosyl-L-methionine.

This sequence belongs to the methyltransferase superfamily. PrmA family.

The protein localises to the cytoplasm. It carries out the reaction L-lysyl-[protein] + 3 S-adenosyl-L-methionine = N(6),N(6),N(6)-trimethyl-L-lysyl-[protein] + 3 S-adenosyl-L-homocysteine + 3 H(+). Functionally, methylates ribosomal protein L11. The chain is Ribosomal protein L11 methyltransferase from Trichodesmium erythraeum (strain IMS101).